Consider the following 122-residue polypeptide: Biogenesis of lysosome-related organelles complex 1 subunit BLS1 (122 aa).

Ser33 bears the Phosphoserine mark.

Belongs to the BLOC1S1 family. Component of the biogenesis of lysosome-related organelles complex-1 (BLOC-1) composed of at least BLI1, BLS1, CNL1, KXD1, SNN1 and VAB2.

It is found in the endosome. In terms of biological role, component of the biogenesis of lysosome-related organelles complex-1 (BLOC-1), a complex involved in endosomal cargo sorting. In Saccharomyces cerevisiae (strain YJM789) (Baker's yeast), this protein is Biogenesis of lysosome-related organelles complex 1 subunit BLS1 (BLS1).